Here is a 277-residue protein sequence, read N- to C-terminus: Elongation factor Ts (277 aa).

The tract at residues 81 to 84 (TDFV) is involved in Mg(2+) ion dislocation from EF-Tu.

This sequence belongs to the EF-Ts family.

The protein resides in the cytoplasm. Functionally, associates with the EF-Tu.GDP complex and induces the exchange of GDP to GTP. It remains bound to the aminoacyl-tRNA.EF-Tu.GTP complex up to the GTP hydrolysis stage on the ribosome. In Amoebophilus asiaticus (strain 5a2), this protein is Elongation factor Ts.